Here is a 940-residue protein sequence, read N- to C-terminus: Reticulon-3 (940 aa).

Over residues 1–24 (MAESSAATQSPSVSSSSSGAEPST) the composition is skewed to low complexity. Disordered regions lie at residues 1–32 (MAESSAATQSPSVSSSSSGAEPSTLGGGGGSP), 71–91 (SSEIYNPDPTTPLGSETLGSH), and 129–182 (DIPC…ALDL). Position 2 is an N-acetylalanine (A2). Topologically, residues 2-771 (AESSAATQSP…KKTGFVFGTT (770 aa)) are cytoplasmic. Residue S31 is modified to Phosphoserine. S196, S204, S209, S212, S249, and S282 each carry phosphoserine. Disordered stretches follow at residues 314–335 (AKQQADKSPCTTESTGLDRSEH), 381–405 (KGYLSSTKEAGGKGVPDSSQPISGS), and 428–512 (EVTE…LEGQ). The span at 430–447 (TEVDSSGESDDTVIEDTT) shows a compositional bias: acidic residues. Basic and acidic residues predominate over residues 472-490 (TSERENKETTSHETVRSEM). Polar residues predominate over residues 491–512 (YENSEQQQAHAETPTQRSLEGQ). S508 carries the post-translational modification Phosphoserine. Phosphothreonine is present on T572. Residues S575, S576, and S652 each carry the phosphoserine modification. Disordered regions lie at residues 623–655 (NKLSSSETKNTKSKYSEHSRETNGGAPKVSSDL) and 672–701 (QVQAERMSPGGKLKRTFDPQSGPQNSSDIL). A compositionally biased stretch (polar residues) spans 689 to 699 (DPQSGPQNSSD). In terms of domain architecture, Reticulon spans 752 to 940 (VHDLIFWRDV…LPGIAKKKAE (189 aa)). Positions 772–795 (LIMLLSLAAFSVISVVSYLILALL) form an intramembrane region, helical. Topologically, residues 796-852 (SVTISFRVYKSVIQAVQKSEEGHPFKAYLDVDITLSSEAFHSYMNAAMVHVNKALKL) are cytoplasmic. The segment at residues 853-875 (IIRLFLVEDLVDSLKLAVFMWLM) is an intramembrane region (helical). The Cytoplasmic segment spans residues 876–879 (TYVG). An intramembrane region (helical) is located at residues 880–902 (AVFNGITLLILAELLVFSVPIVY). Residues 895 to 940 (VFSVPIVYEKYKTQIDHYVGIARDQTKSIVEKIQAKLPGIAKKKAE) are interaction with FADD. The Cytoplasmic segment spans residues 903–940 (EKYKTQIDHYVGIARDQTKSIVEKIQAKLPGIAKKKAE). Residues 908–910 (QID) are interaction with BACE1.

In terms of assembly, homodimer. Interacts with RTN4. Isoform 2 interacts with BACE1, BACE2, BCL2 and FADD. Interacts with ATL2. Interacts with TMEM33. Interacts with ATL1. Interacts with ZFYVE27 and with KIF5A in a ZFYVE27-dependent manner. Interacts with RIGI. Interacts with TRIM25. In terms of tissue distribution, present in olfactory bulb, olfactory epithelium and retina (at protein level).

It is found in the endoplasmic reticulum membrane. The protein resides in the golgi apparatus membrane. May be involved in membrane trafficking in the early secretory pathway. Inhibits BACE1 activity and amyloid precursor protein processing. May induce caspase-8 cascade and apoptosis. May favor BCL2 translocation to the mitochondria upon endoplasmic reticulum stress. Induces the formation of endoplasmic reticulum tubules. Acts also as an inflammation-resolving regulator by interacting with both TRIM25 and RIGI, subsequently impairing RIGI 'Lys-63'-linked polyubiquitination leading to IRF3 and NF-kappa-B inhibition. This chain is Reticulon-3 (Rtn3), found in Rattus norvegicus (Rat).